A 167-amino-acid polypeptide reads, in one-letter code: uncharacterized protein (167 aa).

Residues 39-59 (LSLFSLSPLFLLLSISSLIFS) form a helical membrane-spanning segment. Residues 92–122 (LGTQIEMITQAMTTLESRVTDLQQESNDHRT) adopt a coiled-coil conformation. The segment at 134 to 167 (RDLGDENRPKPTTNKMIATGEQHKGEVSTSLFHD) is disordered. Over residues 154–167 (EQHKGEVSTSLFHD) the composition is skewed to basic and acidic residues.

It is found in the mitochondrion membrane. This is an uncharacterized protein from Arabidopsis thaliana (Mouse-ear cress).